Consider the following 86-residue polypeptide: Cell division topological specificity factor (86 aa).

The protein belongs to the MinE family.

Its function is as follows. Prevents the cell division inhibition by proteins MinC and MinD at internal division sites while permitting inhibition at polar sites. This ensures cell division at the proper site by restricting the formation of a division septum at the midpoint of the long axis of the cell. In Shewanella pealeana (strain ATCC 700345 / ANG-SQ1), this protein is Cell division topological specificity factor.